The primary structure comprises 371 residues: Leu/Ile/Val-binding protein homolog 1 (371 aa).

The first 23 residues, 1-23 (MRKTLFSGVALAAVIAFGGSAWA), serve as a signal peptide directing secretion.

Belongs to the leucine-binding protein family.

Functionally, component of an amino-acid transport system. This chain is Leu/Ile/Val-binding protein homolog 1, found in Brucella melitensis biotype 1 (strain ATCC 23456 / CCUG 17765 / NCTC 10094 / 16M).